Reading from the N-terminus, the 463-residue chain is Myocyte-specific enhancer factor 2C (463 aa).

The region spanning 3 to 57 (RKKIQITRIMDERNRQVTFTKRKFGLMKKAYELSVLCDCEIALIIFNSTNKLFQY) is the MADS-box domain. Lys-4 is subject to N6-acetyllysine. A DNA-binding region (mef2-type) is located at residues 58 to 86 (ASTDMDKVLLKYTEYNEPHESRTNSDIVE). Position 59 is a phosphoserine; by CK2 (Ser-59). Residues Ser-98 and Ser-104 each carry the phosphoserine modification. Residues Lys-114 and Lys-117 each carry the N6-acetyllysine modification. Positions 178–223 (NSMSPGVTHRPPSAGNTGGLMGGDLTSGAGTSAGNGYGNPRNSPGL) are disordered. Phosphoserine is present on residues Ser-220 and Ser-226. N6-acetyllysine occurs at positions 232 and 237. Ser-238 is modified (phosphoserine). Residues Lys-250 and Lys-262 each carry the N6-acetyllysine modification. Thr-283 and Thr-290 each carry phosphothreonine; by MAPK7 and MAPK14. The interval 358-389 (ACTSTHLSQSSNLSLPSTQSLNIKSEPVSPPR) is transcription repressor. A compositionally biased stretch (polar residues) spans 365–380 (SQSSNLSLPSTQSLNI). Positions 365–463 (SQSSNLSLPS…RMRLSEGWAT (99 aa)) are disordered. Residue Lys-381 forms a Glycyl lysine isopeptide (Lys-Gly) (interchain with G-Cter in SUMO) linkage. Ser-386 is modified (phosphoserine; by CDK5). The residue at position 409 (Ser-409) is a Phosphoserine; by MAPK7. Low complexity predominate over residues 409–422 (SPVDSLSSCSSSYD). Residues 423 to 433 (GSDREDHRNEF) show a composition bias toward basic and acidic residues. Ser-435 bears the Phosphoserine mark.

As to quaternary structure, forms a complex with class II HDACs in undifferentiating cells. On myogenic differentiation, HDACs are released into the cytoplasm allowing MEF2s to interact with other proteins for activation. Interacts with EP300 in differentiating cells; the interaction acetylates MEF2C leading to increased DNA binding and activation. Interacts with HDAC7 and CARM1. Interacts with HDAC4, HDAC7 and HDAC9; the interaction with HDACs represses transcriptional activity. Interacts with LPIN1. Interacts with MYOCD. Interacts with AKAP13. Interacts with FOXK1; the interaction inhibits MEF2C transactivation activity. Interacts (via N-terminus) with HABP4; this interaction decreases DNA-binding activity of MEF2C in myocardial cells in response to mechanical stress. Interacts with JPH2; interaction specifically takes place with the Junctophilin-2 N-terminal fragment cleavage product of JPH2. Interacts (via MADS box) with SOX18. Interacts with PHF7; the interaction promotes MEF2C binding to its transcription targets. In terms of processing, phosphorylated on Ser-59; which enhances DNA binding activity. Phosphorylated on Ser-386; which is required for Lys-381 sumoylation and inhibits transcriptional activity. Acetylated by p300 on several sites in diffentiating myocytes. Acetylation on Lys-4 increases DNA binding and transactivation. Post-translationally, sumoylated on Lys-381 with SUMO2 but not SUMO1; which represses transcriptional activity. In terms of processing, proteolytically cleaved in cerebellar granule neurons on several sites by caspase 3 and caspase 7 following neurotoxicity. Preferentially cleaves the CDK5-mediated hyperphosphorylated form which leads to neuron apoptosis and transcriptional inactivation.

The protein resides in the nucleus. It is found in the cytoplasm. The protein localises to the sarcoplasm. Its function is as follows. Transcription activator which binds specifically to the MEF2 element present in the regulatory regions of many muscle-specific genes. Controls cardiac morphogenesis and myogenesis, and is also involved in vascular development. Enhances transcriptional activation mediated by SOX18. Plays an essential role in hippocampal-dependent learning and memory by suppressing the number of excitatory synapses and thus regulating basal and evoked synaptic transmission. Crucial for normal neuronal development, distribution, and electrical activity in the neocortex. Necessary for proper development of megakaryocytes and platelets and for bone marrow B-lymphopoiesis. Required for B-cell survival and proliferation in response to BCR stimulation, efficient IgG1 antibody responses to T-cell-dependent antigens and for normal induction of germinal center B-cells. May also be involved in neurogenesis and in the development of cortical architecture. In Sus scrofa (Pig), this protein is Myocyte-specific enhancer factor 2C.